The following is an 859-amino-acid chain: Bifunctional levopimaradiene synthase, chloroplastic (859 aa).

Residues 1–70 (MALLSSSLSS…IACVGEDSLS (70 aa)) constitute a chloroplast transit peptide. Lysine 259 serves as a coordination point for substrate. Mg(2+)-binding residues include aspartate 392 and aspartate 394. The DXDD motif motif lies at 392–395 (DIDD). Lysine 479 is a binding site for substrate. Mg(2+)-binding residues include aspartate 611, aspartate 615, asparagine 755, threonine 759, and glutamate 763. A DDXXD motif motif is present at residues 611–615 (DDLYD).

The protein belongs to the terpene synthase family. Tpsd subfamily. Mg(2+) serves as cofactor.

The protein resides in the plastid. Its subcellular location is the chloroplast. It carries out the reaction (2E,6E,10E)-geranylgeranyl diphosphate = (+)-copalyl diphosphate. The catalysed reaction is (+)-copalyl diphosphate = abieta-8(14),12-diene + diphosphate. It functions in the pathway terpene metabolism; oleoresin biosynthesis. Its function is as follows. Involved in defensive oleoresin formation in conifers in response to insect attack or other injury. Involved in diterpene (C20) olefins biosynthesis. Bifunctional enzyme that catalyzes two sequential cyclizations of geranylgeranyl diphosphate (GGPP) to levopimaradiene. Levopimaradiene is the major products of the enzyme followed by abietadiene, neoabietadiene and palustradiene. In Picea abies (Norway spruce), this protein is Bifunctional levopimaradiene synthase, chloroplastic (TPS-LAS).